Reading from the N-terminus, the 241-residue chain is Probable transcriptional regulatory protein LMOf2365_1554 (241 aa).

Residues 1–14 are compositionally biased toward polar residues; that stretch reads MSGHSKWNNIQGRK. Residues 1–22 form a disordered region; it reads MSGHSKWNNIQGRKNAQDSKRS.

This sequence belongs to the TACO1 family.

Its subcellular location is the cytoplasm. This Listeria monocytogenes serotype 4b (strain F2365) protein is Probable transcriptional regulatory protein LMOf2365_1554.